The sequence spans 162 residues: UPF0303 protein Arad_3071 (162 aa).

Belongs to the UPF0303 family.

The chain is UPF0303 protein Arad_3071 from Rhizobium rhizogenes (strain K84 / ATCC BAA-868) (Agrobacterium radiobacter).